The sequence spans 358 residues: Probable D-xylulose reductase A (358 aa).

Residues Cys47, His72, and Glu73 each contribute to the Zn(2+) site. 182–187 (GAGPVG) is a binding site for NAD(+).

This sequence belongs to the zinc-containing alcohol dehydrogenase family. The cofactor is Zn(2+).

It carries out the reaction xylitol + NAD(+) = D-xylulose + NADH + H(+). It functions in the pathway carbohydrate degradation; L-arabinose degradation via L-arabinitol; D-xylulose 5-phosphate from L-arabinose (fungal route): step 4/5. In terms of biological role, xylitol dehydrogenase which catalyzes the conversion of xylitol to D-xylulose. Xylose is a major component of hemicelluloses such as xylan. Most fungi utilize D-xylose via three enzymatic reactions, xylose reductase (XR), xylitol dehydrogenase (XDH), and xylulokinase, to form xylulose 5-phosphate, which enters pentose phosphate pathway. This chain is Probable D-xylulose reductase A (xdhA), found in Aspergillus niger (strain ATCC MYA-4892 / CBS 513.88 / FGSC A1513).